Reading from the N-terminus, the 109-residue chain is Nucleoid-associated protein CGSHiEE_00780 (109 aa).

Belongs to the YbaB/EbfC family. Homodimer.

The protein localises to the cytoplasm. It is found in the nucleoid. In terms of biological role, binds to DNA and alters its conformation. May be involved in regulation of gene expression, nucleoid organization and DNA protection. This is Nucleoid-associated protein CGSHiEE_00780 from Haemophilus influenzae (strain PittEE).